The chain runs to 602 residues: Multicopper oxidase aurL2 (602 aa).

A signal peptide spans 1–17 (MLFRFLALLPFVAGAFA). Plastocyanin-like domains follow at residues 38–149 (DIKI…VRDA) and 160–317 (IPLL…KYRC). Residues asparagine 52 and asparagine 80 are each glycosylated (N-linked (GlcNAc...) asparagine). Cu cation-binding residues include histidine 84, histidine 86, histidine 130, and histidine 132. Residues asparagine 201, asparagine 247, asparagine 337, asparagine 383, asparagine 387, asparagine 419, and asparagine 424 are each glycosylated (N-linked (GlcNAc...) asparagine). One can recognise a Plastocyanin-like 3 domain in the interval 421-556 (TTPNYTLALE…QVMGMATVWV (136 aa)). Cu cation is bound at residue histidine 469. Asparagine 482 and asparagine 486 each carry an N-linked (GlcNAc...) asparagine glycan.

Belongs to the multicopper oxidase family.

Its pathway is pigment biosynthesis. Functionally, multicopper oxidase; part of the gene cluster that mediates the biosynthesis of aurofusarin, a red mycelium pigment which is acting as a mycotoxin. The first step is performed by the polyketide synthase which condenses one acetyl-CoA and 6 malonyl-CoA units to form the first intermediate, the cyclic heptaketide and yellow pigment YWA1. The C2 hydroxyl group in the pyrone ring of YWA1 is probably formed during ring closure by an aldol-type cyclization reaction. The dehydratase aurZ then acts as the first tailoring enzyme in the aurofusarin biosynthetic pathway by converting YWA1 to nor-rubrofusarin. Nor-rubrofusarin is then methylated to rubrofusarin by the O-methyltransferase aurJ. Rubrofusarin is then transported across the plasma membrane by the rubrofusarin-specific pump aurT for further enzymatic processing by the extracellular complex composed of GIP1, aurF, aurO and aurS to yield aurofusarin. The sequence is that of Multicopper oxidase aurL2 (aurL2) from Gibberella zeae (strain ATCC MYA-4620 / CBS 123657 / FGSC 9075 / NRRL 31084 / PH-1) (Wheat head blight fungus).